The sequence spans 187 residues: MPNQEKMEKAIYQFLEALGENPDREGLKDTPKRVAKMYIEMFSGLNQDPKEQFTAVFSENHEEVVIVKDIPFYSMCEHHLVPFYGKAHIAYLPNDGRVTGLSKLARAFEVASKRPQLQERLTAQVAQALEDALAPKGIFVMIEAEHMCMTMRGIKKPGSKTITTVARGLYKDDRYERQEILSLIQKG.

Residues Cys-76, His-79, and Cys-148 each coordinate Zn(2+).

Belongs to the GTP cyclohydrolase I family. As to quaternary structure, toroid-shaped homodecamer, composed of two pentamers of five dimers.

It catalyses the reaction GTP + H2O = 7,8-dihydroneopterin 3'-triphosphate + formate + H(+). Its pathway is cofactor biosynthesis; 7,8-dihydroneopterin triphosphate biosynthesis; 7,8-dihydroneopterin triphosphate from GTP: step 1/1. The polypeptide is GTP cyclohydrolase 1 (Streptococcus agalactiae serotype III (strain NEM316)).